The following is a 445-amino-acid chain: Oxysterols receptor LXR-alpha (445 aa).

2 disordered regions span residues 1–34 (MSLW…QGGN) and 62–86 (TALL…KKGP). Residues 1–94 (MSLWLEAAVP…GPAPKMLGNE (94 aa)) are transactivation AF-1; required for ligand-independent transactivation function. Residues 93–168 (NELCSVCGDK…AGMREECVLS (76 aa)) constitute a DNA-binding region (nuclear receptor). 2 NR C4-type zinc fingers span residues 96–116 (CSVC…CEGC) and 132–156 (CHSG…LRKC). The disordered stretch occupies residues 178–200 (KRQEEEQAQATSVSPRVSSPPQV). Positions 189–200 (SVSPRVSSPPQV) are enriched in low complexity. Ser-191 bears the Phosphoserine mark. The transactivation AF-2; required for ligand-dependent transactivation function; mediates interaction with CCAR2 stretch occupies residues 203 to 445 (QLSPEQLGMI…LLSEIWDVHE (243 aa)). One can recognise an NR LBD domain in the interval 207–445 (EQLGMIEKLV…LLSEIWDVHE (239 aa)).

It belongs to the nuclear hormone receptor family. NR1 subfamily. In terms of assembly, heterodimer of NR1H3 and RXR (retinoic acid receptor). Interacts with CCAR2 (via N-terminus) in a ligand-independent manner. Interacts with SIRT1 and this interaction is inhibited by CCAR2. In terms of processing, ubiquitinated by UBR5, leading to its degradation: UBR5 specifically recognizes and binds ligand-bound NR1H3 when it is not associated with coactivators (NCOAs). In presence of NCOAs, the UBR5-degron is not accessible, preventing its ubiquitination and degradation. In terms of tissue distribution, in adults it is expressed in spleen, pituitary, lung, liver, and fat. Weaker expression is observed in several other tissues.

The protein resides in the nucleus. It is found in the cytoplasm. In terms of biological role, nuclear receptor that exhibits a ligand-dependent transcriptional activation activity. Interaction with retinoic acid receptor (RXR) shifts RXR from its role as a silent DNA-binding partner to an active ligand-binding subunit in mediating retinoid responses through target genes defined by LXRES. LXRES are DR4-type response elements characterized by direct repeats of two similar hexanuclotide half-sites spaced by four nucleotides. Plays an important role in the regulation of cholesterol homeostasis, regulating cholesterol uptake through MYLIP-dependent ubiquitination of LDLR, VLDLR and LRP8. Interplays functionally with RORA for the regulation of genes involved in liver metabolism. Induces LPCAT3-dependent phospholipid remodeling in endoplasmic reticulum (ER) membranes of hepatocytes, driving SREBF1 processing and lipogenesis. Via LPCAT3, triggers the incorporation of arachidonate into phosphatidylcholines of ER membranes, increasing membrane dynamics and enabling triacylglycerols transfer to nascent very low-density lipoprotein (VLDL) particles. Via LPCAT3 also counteracts lipid-induced ER stress response and inflammation, likely by modulating SRC kinase membrane compartmentalization and limiting the synthesis of lipid inflammatory mediators. The protein is Oxysterols receptor LXR-alpha (Nr1h3) of Rattus norvegicus (Rat).